The chain runs to 324 residues: Protein FAM228B (324 aa).

It belongs to the FAM228 family.

In Homo sapiens (Human), this protein is Protein FAM228B (FAM228B).